The sequence spans 207 residues: Uracil phosphoribosyltransferase (207 aa).

Residues arginine 77, arginine 102, and 129–137 each bind 5-phospho-alpha-D-ribose 1-diphosphate; that span reads DPMLATGGS. Residues isoleucine 192 and 197 to 199 contribute to the uracil site; that span reads GDA. Aspartate 198 contributes to the 5-phospho-alpha-D-ribose 1-diphosphate binding site.

The protein belongs to the UPRTase family. Mg(2+) serves as cofactor.

The enzyme catalyses UMP + diphosphate = 5-phospho-alpha-D-ribose 1-diphosphate + uracil. It functions in the pathway pyrimidine metabolism; UMP biosynthesis via salvage pathway; UMP from uracil: step 1/1. Allosterically activated by GTP. Its function is as follows. Catalyzes the conversion of uracil and 5-phospho-alpha-D-ribose 1-diphosphate (PRPP) to UMP and diphosphate. In Nocardia farcinica (strain IFM 10152), this protein is Uracil phosphoribosyltransferase.